Reading from the N-terminus, the 169-residue chain is Phosphopantetheine adenylyltransferase (169 aa).

Ser-10 contributes to the substrate binding site. ATP is bound by residues 10–11 and His-18; that span reads SF. Substrate-binding residues include Lys-42, Leu-74, and Arg-88. ATP-binding positions include 89–91, Glu-99, and 124–130; these read GLR and YAFLSSS.

The protein belongs to the bacterial CoaD family. As to quaternary structure, homohexamer. Requires Mg(2+) as cofactor.

The protein localises to the cytoplasm. The enzyme catalyses (R)-4'-phosphopantetheine + ATP + H(+) = 3'-dephospho-CoA + diphosphate. The protein operates within cofactor biosynthesis; coenzyme A biosynthesis; CoA from (R)-pantothenate: step 4/5. Its function is as follows. Reversibly transfers an adenylyl group from ATP to 4'-phosphopantetheine, yielding dephospho-CoA (dPCoA) and pyrophosphate. The protein is Phosphopantetheine adenylyltransferase of Geobacillus sp. (strain WCH70).